The following is a 287-amino-acid chain: Pantothenate synthetase (287 aa).

An ATP-binding site is contributed by 30 to 37; sequence MGALHEGH. The Proton donor role is filled by His37. Gln61 lines the (R)-pantoate pocket. A beta-alanine-binding site is contributed by Gln61. Residue 147 to 150 coordinates ATP; sequence GEKD. Position 153 (Gln153) interacts with (R)-pantoate. ATP is bound at residue 184–187; the sequence is MSSR.

This sequence belongs to the pantothenate synthetase family. Homodimer.

Its subcellular location is the cytoplasm. It catalyses the reaction (R)-pantoate + beta-alanine + ATP = (R)-pantothenate + AMP + diphosphate + H(+). The protein operates within cofactor biosynthesis; (R)-pantothenate biosynthesis; (R)-pantothenate from (R)-pantoate and beta-alanine: step 1/1. In terms of biological role, catalyzes the condensation of pantoate with beta-alanine in an ATP-dependent reaction via a pantoyl-adenylate intermediate. This Granulibacter bethesdensis (strain ATCC BAA-1260 / CGDNIH1) protein is Pantothenate synthetase.